A 220-amino-acid chain; its full sequence is Glutamine amidotransferase-like class 1 domain-containing protein 1 (220 aa).

Positions Met1–Ala38 are cleaved as a signal peptide. N-linked (GlcNAc...) asparagine glycosylation occurs at Asn201.

It belongs to the peptidase C56 family. As to quaternary structure, homotetramer. Component of the FERRY complex composed of five subunits, TBCK, PPP1R21, FERRY3, CRYZL1 and GATD1 with a ratio of 1:2:1:2:4, respectively.

Its subcellular location is the secreted. It localises to the early endosome. Its function is as follows. Component of the FERRY complex (Five-subunit Endosomal Rab5 and RNA/ribosome intermediary). The FERRY complex directly interacts with mRNAs and RAB5A, and functions as a RAB5A effector involved in the localization and the distribution of specific mRNAs most likely by mediating their endosomal transport. The complex recruits mRNAs and ribosomes to early endosomes through direct mRNA-interaction. In Homo sapiens (Human), this protein is Glutamine amidotransferase-like class 1 domain-containing protein 1.